The following is a 504-amino-acid chain: Maturase K (504 aa).

Belongs to the intron maturase 2 family. MatK subfamily.

It localises to the plastid. It is found in the chloroplast. Its function is as follows. Usually encoded in the trnK tRNA gene intron. Probably assists in splicing its own and other chloroplast group II introns. This chain is Maturase K, found in Arabidopsis lyrata (Lyre-leaved rock-cress).